A 602-amino-acid chain; its full sequence is Elongation factor 4 (602 aa).

In terms of domain architecture, tr-type G spans 8-190 (DLIRNFSIVA…AIVHRLPPPK (183 aa)). GTP contacts are provided by residues 20–25 (DHGKST) and 137–140 (NKID).

Belongs to the TRAFAC class translation factor GTPase superfamily. Classic translation factor GTPase family. LepA subfamily.

It is found in the cell inner membrane. The catalysed reaction is GTP + H2O = GDP + phosphate + H(+). Required for accurate and efficient protein synthesis under certain stress conditions. May act as a fidelity factor of the translation reaction, by catalyzing a one-codon backward translocation of tRNAs on improperly translocated ribosomes. Back-translocation proceeds from a post-translocation (POST) complex to a pre-translocation (PRE) complex, thus giving elongation factor G a second chance to translocate the tRNAs correctly. Binds to ribosomes in a GTP-dependent manner. The sequence is that of Elongation factor 4 from Cereibacter sphaeroides (strain ATCC 17029 / ATH 2.4.9) (Rhodobacter sphaeroides).